A 94-amino-acid polypeptide reads, in one-letter code: Acylphosphatase (94 aa).

The 87-residue stretch at 8-94 folds into the Acylphosphatase-like domain; sequence ALHVIVKGRV…RGYTDFRIEV (87 aa). Residues Arg-23 and Asn-41 contribute to the active site.

It belongs to the acylphosphatase family.

It catalyses the reaction an acyl phosphate + H2O = a carboxylate + phosphate + H(+). The sequence is that of Acylphosphatase (acyP) from Treponema denticola (strain ATCC 35405 / DSM 14222 / CIP 103919 / JCM 8153 / KCTC 15104).